The primary structure comprises 548 residues: Formyltransferase/hydrolase complex Fhc subunit A (548 aa).

The Zn(2+) site is built by histidine 57, histidine 59, and histidine 227.

This sequence belongs to the metallo-dependent hydrolases superfamily. FwdA/FmdA family. As to quaternary structure, octaheteromer. Part of the formyltransferase/hydrolase complex fhc; composed of FhcA, FhcB, FhcC and FhcD. Zn(2+) serves as cofactor.

It localises to the cytoplasm. It carries out the reaction N-formylmethanofuran + H2O = methanofuran + formate. It functions in the pathway one-carbon metabolism; formaldehyde degradation; formate from formaldehyde (H(4)MPT route): step 4/5. In terms of biological role, involved in the transformation of 5-formyl tetrahydromethanopterin (5-formyl-H(4)MPT) to methanofuran (MFR) and formate via the formylmethanofuran (formyl-MFR). May be catalyze the hydrolysis of formylmethanofuran (formyl-MFR) to yield formate and MFR. This chain is Formyltransferase/hydrolase complex Fhc subunit A (fhcA), found in Methylorubrum extorquens (strain ATCC 14718 / DSM 1338 / JCM 2805 / NCIMB 9133 / AM1) (Methylobacterium extorquens).